We begin with the raw amino-acid sequence, 116 residues long: Protein aq_1857 (116 aa).

It belongs to the HesB/IscA family.

The protein is Protein aq_1857 of Aquifex aeolicus (strain VF5).